Reading from the N-terminus, the 137-residue chain is Large ribosomal subunit protein uL16 (137 aa).

It belongs to the universal ribosomal protein uL16 family. Part of the 50S ribosomal subunit.

Functionally, binds 23S rRNA and is also seen to make contacts with the A and possibly P site tRNAs. The sequence is that of Large ribosomal subunit protein uL16 from Wolbachia pipientis subsp. Culex pipiens (strain wPip).